Consider the following 358-residue polypeptide: Chorismate synthase (358 aa).

Arg47 is an NADP(+) binding site. Residues 124-126 (RSS), 240-241 (NA), Gly284, 299-303 (KPVAT), and Arg325 each bind FMN.

The protein belongs to the chorismate synthase family. In terms of assembly, homotetramer. FMNH2 is required as a cofactor.

The enzyme catalyses 5-O-(1-carboxyvinyl)-3-phosphoshikimate = chorismate + phosphate. It functions in the pathway metabolic intermediate biosynthesis; chorismate biosynthesis; chorismate from D-erythrose 4-phosphate and phosphoenolpyruvate: step 7/7. Functionally, catalyzes the anti-1,4-elimination of the C-3 phosphate and the C-6 proR hydrogen from 5-enolpyruvylshikimate-3-phosphate (EPSP) to yield chorismate, which is the branch point compound that serves as the starting substrate for the three terminal pathways of aromatic amino acid biosynthesis. This reaction introduces a second double bond into the aromatic ring system. The polypeptide is Chorismate synthase (Phocaeicola vulgatus (strain ATCC 8482 / DSM 1447 / JCM 5826 / CCUG 4940 / NBRC 14291 / NCTC 11154) (Bacteroides vulgatus)).